Consider the following 500-residue polypeptide: L-arabinose isomerase (500 aa).

Mn(2+) is bound by residues Glu-306, Glu-333, His-350, and His-450.

The protein belongs to the arabinose isomerase family. In terms of assembly, homohexamer. Requires Mn(2+) as cofactor.

The enzyme catalyses beta-L-arabinopyranose = L-ribulose. It participates in carbohydrate degradation; L-arabinose degradation via L-ribulose; D-xylulose 5-phosphate from L-arabinose (bacterial route): step 1/3. Catalyzes the conversion of L-arabinose to L-ribulose. In Yersinia pseudotuberculosis serotype O:3 (strain YPIII), this protein is L-arabinose isomerase.